A 733-amino-acid chain; its full sequence is Phosphoribosylformylglycinamidine synthase subunit PurL (733 aa).

Histidine 41 is an active-site residue. ATP is bound by residues tyrosine 44 and lysine 83. Glutamate 85 contacts Mg(2+). Residues 86 to 89 (SHNH) and arginine 108 each bind substrate. Histidine 87 acts as the Proton acceptor in catalysis. Aspartate 109 contributes to the Mg(2+) binding site. A disordered region spans residues 212 to 232 (GASFASQELSEESEEKRPSVQ). Glutamine 232 provides a ligand contact to substrate. Aspartate 260 lines the Mg(2+) pocket. 304–306 (ESQ) contacts substrate. Residues aspartate 488 and glycine 525 each coordinate ATP. Asparagine 526 serves as a coordination point for Mg(2+). Serine 528 serves as a coordination point for substrate.

This sequence belongs to the FGAMS family. In terms of assembly, monomer. Part of the FGAM synthase complex composed of 1 PurL, 1 PurQ and 2 PurS subunits.

Its subcellular location is the cytoplasm. It carries out the reaction N(2)-formyl-N(1)-(5-phospho-beta-D-ribosyl)glycinamide + L-glutamine + ATP + H2O = 2-formamido-N(1)-(5-O-phospho-beta-D-ribosyl)acetamidine + L-glutamate + ADP + phosphate + H(+). Its pathway is purine metabolism; IMP biosynthesis via de novo pathway; 5-amino-1-(5-phospho-D-ribosyl)imidazole from N(2)-formyl-N(1)-(5-phospho-D-ribosyl)glycinamide: step 1/2. Part of the phosphoribosylformylglycinamidine synthase complex involved in the purines biosynthetic pathway. Catalyzes the ATP-dependent conversion of formylglycinamide ribonucleotide (FGAR) and glutamine to yield formylglycinamidine ribonucleotide (FGAM) and glutamate. The FGAM synthase complex is composed of three subunits. PurQ produces an ammonia molecule by converting glutamine to glutamate. PurL transfers the ammonia molecule to FGAR to form FGAM in an ATP-dependent manner. PurS interacts with PurQ and PurL and is thought to assist in the transfer of the ammonia molecule from PurQ to PurL. The chain is Phosphoribosylformylglycinamidine synthase subunit PurL from Caldanaerobacter subterraneus subsp. tengcongensis (strain DSM 15242 / JCM 11007 / NBRC 100824 / MB4) (Thermoanaerobacter tengcongensis).